The chain runs to 326 residues: GTP 3',8-cyclase (326 aa).

Residues 4–227 form the Radical SAM core domain; that stretch reads KHERNINYMR…LTPQKNILGN (224 aa). R13 serves as a coordination point for GTP. Positions 20 and 24 each coordinate [4Fe-4S] cluster. Y26 serves as a coordination point for S-adenosyl-L-methionine. C27 is a [4Fe-4S] cluster binding site. R63 lines the GTP pocket. S-adenosyl-L-methionine is bound at residue G67. T94 contributes to the GTP binding site. S118 serves as a coordination point for S-adenosyl-L-methionine. Position 155 (K155) interacts with GTP. M189 contributes to the S-adenosyl-L-methionine binding site. 2 residues coordinate [4Fe-4S] cluster: C253 and C256. 258-260 is a binding site for GTP; it reads RIR. C270 provides a ligand contact to [4Fe-4S] cluster.

It belongs to the radical SAM superfamily. MoaA family. Monomer and homodimer. The cofactor is [4Fe-4S] cluster.

The catalysed reaction is GTP + AH2 + S-adenosyl-L-methionine = (8S)-3',8-cyclo-7,8-dihydroguanosine 5'-triphosphate + 5'-deoxyadenosine + L-methionine + A + H(+). It participates in cofactor biosynthesis; molybdopterin biosynthesis. Its function is as follows. Catalyzes the cyclization of GTP to (8S)-3',8-cyclo-7,8-dihydroguanosine 5'-triphosphate. The sequence is that of GTP 3',8-cyclase from Syntrophomonas wolfei subsp. wolfei (strain DSM 2245B / Goettingen).